The chain runs to 176 residues: Large ribosomal subunit protein uL6 (176 aa).

Residues 151 to 169 (RPPEPYKGRGIKYTDEHIQ) show a composition bias toward basic and acidic residues. Residues 151–176 (RPPEPYKGRGIKYTDEHIQRKAGKTK) are disordered.

It belongs to the universal ribosomal protein uL6 family. Part of the 50S ribosomal subunit.

This protein binds to the 23S rRNA, and is important in its secondary structure. It is located near the subunit interface in the base of the L7/L12 stalk, and near the tRNA binding site of the peptidyltransferase center. The sequence is that of Large ribosomal subunit protein uL6 from Desulfosudis oleivorans (strain DSM 6200 / JCM 39069 / Hxd3) (Desulfococcus oleovorans).